A 144-amino-acid polypeptide reads, in one-letter code: Putative golgin subfamily A member 2B (144 aa).

Disordered regions lie at residues 1-20 and 95-132; these read MDSE…PEDL and SCGR…EAAG. Residues 110-131 are compositionally biased toward gly residues; the sequence is AEGGGVHQQAGPGQGRGEGEAA.

The protein belongs to the GOLGA2 family.

This is Putative golgin subfamily A member 2B (GOLGA2P5) from Homo sapiens (Human).